We begin with the raw amino-acid sequence, 123 residues long: Small ribosomal subunit protein uS12c (123 aa).

The protein belongs to the universal ribosomal protein uS12 family. In terms of assembly, part of the 30S ribosomal subunit.

The protein localises to the plastid. Its subcellular location is the chloroplast. Its function is as follows. With S4 and S5 plays an important role in translational accuracy. Located at the interface of the 30S and 50S subunits. This chain is Small ribosomal subunit protein uS12c (rps12), found in Chaetosphaeridium globosum (Charophycean green alga).